The following is a 406-amino-acid chain: MSQPITRENFDEWMIPVYAPAPFIPVRGEGSRLWDQQGKEYIDFAGGIAVNALGHAHPELREALNEQASKFWHTGNGYTNEPVLRLAKKLIDATFADRVFFCNSGAEANEAALKLARKFAHDRYGSHKSGIMAFKNAFHGRTLFTVSAGGQPAYSQDFAPLPPDIRHAAYNDINSASALIDDATCAVIVEPIQGEGGVVPASNAFLQGLRELCDRHNALLIFDEVQTGVGRTGELYAYMHYGVTPDLLTTAKALGGDFPVGALLTTEECASVMTVGTHGTTYGGNPLASAVAGKVLELINTPEMLNGVKQRHDWFVERLNTINHRYGLFSEVRGLGLLIGCVLNADYAGQAKQISQEAAKAGVMVLIAGGNVVRFAPALNVSEEEVTTGLDRFAAACEHFVSRGSS.

Lys-252 is modified (N6-(pyridoxal phosphate)lysine).

Belongs to the class-III pyridoxal-phosphate-dependent aminotransferase family. AstC subfamily. Requires pyridoxal 5'-phosphate as cofactor.

It catalyses the reaction N(2)-succinyl-L-ornithine + 2-oxoglutarate = N-succinyl-L-glutamate 5-semialdehyde + L-glutamate. It functions in the pathway amino-acid degradation; L-arginine degradation via AST pathway; L-glutamate and succinate from L-arginine: step 3/5. Functionally, catalyzes the transamination of N(2)-succinylornithine and alpha-ketoglutarate into N(2)-succinylglutamate semialdehyde and glutamate. Can also act as an acetylornithine aminotransferase. This chain is Succinylornithine transaminase, found in Shigella boydii serotype 18 (strain CDC 3083-94 / BS512).